Reading from the N-terminus, the 213-residue chain is Ribonuclease T (213 aa).

The Exonuclease domain occupies 28-202 (VVVDVETGGF…YDTEQTARLF (175 aa)). Residues aspartate 31, glutamate 33, histidine 189, and aspartate 194 each coordinate Mg(2+). Residue histidine 189 is the Proton donor/acceptor of the active site.

Belongs to the RNase T family. Homodimer. Requires Mg(2+) as cofactor.

Functionally, trims short 3' overhangs of a variety of RNA species, leaving a one or two nucleotide 3' overhang. Responsible for the end-turnover of tRNA: specifically removes the terminal AMP residue from uncharged tRNA (tRNA-C-C-A). Also appears to be involved in tRNA biosynthesis. This Xanthomonas axonopodis pv. citri (strain 306) protein is Ribonuclease T.